The sequence spans 442 residues: GTPase HflX (442 aa).

The Hflx-type G domain occupies 186 to 362; that stretch reads VLVALAGYTN…ALNRVVLKLP (177 aa). GTP-binding positions include 192-199, 217-221, 238-241, 306-309, and 341-343; these read GYTNAGKS, FTTLD, DTVG, NKID, and SAR. Residues S199 and T219 each coordinate Mg(2+).

It belongs to the TRAFAC class OBG-HflX-like GTPase superfamily. HflX GTPase family. As to quaternary structure, monomer. Associates with the 50S ribosomal subunit. Requires Mg(2+) as cofactor.

The protein resides in the cytoplasm. Functionally, GTPase that associates with the 50S ribosomal subunit and may have a role during protein synthesis or ribosome biogenesis. This chain is GTPase HflX, found in Thermococcus kodakarensis (strain ATCC BAA-918 / JCM 12380 / KOD1) (Pyrococcus kodakaraensis (strain KOD1)).